A 263-amino-acid polypeptide reads, in one-letter code: tRNA pseudouridine synthase A (263 aa).

The active-site Nucleophile is the Asp-73. Tyr-131 provides a ligand contact to substrate.

This sequence belongs to the tRNA pseudouridine synthase TruA family. In terms of assembly, homodimer.

The enzyme catalyses uridine(38/39/40) in tRNA = pseudouridine(38/39/40) in tRNA. In terms of biological role, formation of pseudouridine at positions 38, 39 and 40 in the anticodon stem and loop of transfer RNAs. The chain is tRNA pseudouridine synthase A from Mycoplasmoides gallisepticum (strain R(low / passage 15 / clone 2)) (Mycoplasma gallisepticum).